The sequence spans 539 residues: Chaperonin GroEL 1 (539 aa).

Residues 29–32, 86–90, Gly413, and Asp493 each bind ATP; these read TLGP and DGTTT.

Belongs to the chaperonin (HSP60) family. Forms a cylinder of 14 subunits composed of two heptameric rings stacked back-to-back. Interacts with the co-chaperonin GroES.

It is found in the cytoplasm. The enzyme catalyses ATP + H2O + a folded polypeptide = ADP + phosphate + an unfolded polypeptide.. Together with its co-chaperonin GroES, plays an essential role in assisting protein folding. The GroEL-GroES system forms a nano-cage that allows encapsulation of the non-native substrate proteins and provides a physical environment optimized to promote and accelerate protein folding. The polypeptide is Chaperonin GroEL 1 (Acidothermus cellulolyticus (strain ATCC 43068 / DSM 8971 / 11B)).